Consider the following 682-residue polypeptide: MAAAVASGIAPTTAMVDQVIPNQPTVAAAAPPPFPAVSQVAAVAAAAAAAEALQTHPNSSLYVGDLDPSVNESHLLDLFNQVAPVHNLRVCRDLTHRSLGYAYVNFANPEDASRAMESLNYAPIRDRPIRIMLSNRDPSTRLSGKGNVFIKNLDASIDNKALYETFSSFGTILSCKVAMDVVGRSKGYGFVQFEKEETAQAAIDKLNGMLLNDKQVFVGHFVRRQDRARSESGAVPSFTNVYVKNLPKEITDDELKKTFGKYGDISSAVVMKDQSGNSRSFGFVNFVSPEAAAVAVEKMNGISLGEDVLYVGRAQKKSDREEELRRKFEQERISRFEKLQGSNLYLKNLDDSVNDEKLKEMFSEYGNVTSCKVMMNSQGLSRGFGFVAYSNPEEALLAMKEMNGKMIGRKPLYVALAQRKEERQAHLQSLFTQIRSPGTMSPVPSPMSGFHHHPPGGPMSGPHHPMFIGHNGQGLVPSQPMGYGYQVQFMPGMRPGAGPPNFMMPFPLQRQTQPGPRVGFRRGANNMQQQFQQQQMLQQNASRFMGGAGNRRNGMEASAPQGIIPLPLNASANSHNAPQRSHKPTPLTISKLASDLALASPDKHPRMLGDHLYPLVEQQEPANAAKVTGMLLEMDQAEILHLLESPEALKAKVSEALDVLRRSADPAAVSSVDDQFALSSSE.

4 RRM domains span residues 59 to 136 (SSLY…LSNR), 146 to 223 (GNVF…HFVR), 239 to 316 (TNVY…RAQK), and 342 to 419 (SNLY…LAQR). The PABC domain occupies 588 to 665 (TISKLASDLA…ALDVLRRSAD (78 aa)). A Phosphoserine modification is found at serine 600.

The protein belongs to the polyadenylate-binding protein type-1 family. In terms of tissue distribution, expressed predominantly in immature flowers but also at lower levels in mature flowers and siliques. Detected in tapetum, pollen, ovules and developing seeds. Also detected in primary inflorescences and immature siliques.

It localises to the cytoplasm. It is found in the nucleus. Functionally, binds the poly(A) tail of mRNA. Appears to be an important mediator of the multiple roles of the poly(A) tail in mRNA biogenesis, stability and translation. This Arabidopsis thaliana (Mouse-ear cress) protein is Polyadenylate-binding protein 5 (PAB5).